A 159-amino-acid polypeptide reads, in one-letter code: MDIRTGNGFDVHAFGPGDHVWLCGVRVPHHRGLIGHSDADVGMHALTDAIYGALAEGDIGVHFPPSDPQWKGAASRIFLEHAMGRIAARGYTLANCDVTLICERPKIGPVAPAMREALAEIMGIAADRISVKATTSEKLGFTGREEGIAAIATVALLQA.

Residues Asp10 and His12 each coordinate a divalent metal cation. 4-CDP-2-C-methyl-D-erythritol 2-phosphate-binding positions include 10-12 and 36-37; these read DVH and HS. Position 44 (His44) interacts with a divalent metal cation. 4-CDP-2-C-methyl-D-erythritol 2-phosphate contacts are provided by residues 58-60, 134-137, Phe141, and Arg144; these read DIG and TTSE.

This sequence belongs to the IspF family. As to quaternary structure, homotrimer. A divalent metal cation serves as cofactor.

It catalyses the reaction 4-CDP-2-C-methyl-D-erythritol 2-phosphate = 2-C-methyl-D-erythritol 2,4-cyclic diphosphate + CMP. It participates in isoprenoid biosynthesis; isopentenyl diphosphate biosynthesis via DXP pathway; isopentenyl diphosphate from 1-deoxy-D-xylulose 5-phosphate: step 4/6. Involved in the biosynthesis of isopentenyl diphosphate (IPP) and dimethylallyl diphosphate (DMAPP), two major building blocks of isoprenoid compounds. Catalyzes the conversion of 4-diphosphocytidyl-2-C-methyl-D-erythritol 2-phosphate (CDP-ME2P) to 2-C-methyl-D-erythritol 2,4-cyclodiphosphate (ME-CPP) with a corresponding release of cytidine 5-monophosphate (CMP). This Cereibacter sphaeroides (strain ATCC 17029 / ATH 2.4.9) (Rhodobacter sphaeroides) protein is 2-C-methyl-D-erythritol 2,4-cyclodiphosphate synthase.